The sequence spans 825 residues: Phenylalanine--tRNA ligase beta subunit (825 aa).

A tRNA-binding domain is found at 39–154 (RTWADGVVLG…EAHPLGSDVR (116 aa)). A B5 domain is found at 411–506 (PLERTLKLRL…RLYGYDRFSE (96 aa)). Residues Asp-484, Asp-490, Glu-493, and Glu-494 each contribute to the Mg(2+) site. The FDX-ACB domain occupies 731 to 824 (SPFPAADRDI…LATQFPVTLR (94 aa)).

The protein belongs to the phenylalanyl-tRNA synthetase beta subunit family. Type 1 subfamily. Tetramer of two alpha and two beta subunits. Mg(2+) is required as a cofactor.

It localises to the cytoplasm. It carries out the reaction tRNA(Phe) + L-phenylalanine + ATP = L-phenylalanyl-tRNA(Phe) + AMP + diphosphate + H(+). The polypeptide is Phenylalanine--tRNA ligase beta subunit (Synechococcus sp. (strain JA-2-3B'a(2-13)) (Cyanobacteria bacterium Yellowstone B-Prime)).